The primary structure comprises 153 residues: Endoribonuclease YbeY (153 aa).

3 residues coordinate Zn(2+): His-114, His-118, and His-124.

This sequence belongs to the endoribonuclease YbeY family. Requires Zn(2+) as cofactor.

It localises to the cytoplasm. Functionally, single strand-specific metallo-endoribonuclease involved in late-stage 70S ribosome quality control and in maturation of the 3' terminus of the 16S rRNA. The sequence is that of Endoribonuclease YbeY from Shewanella oneidensis (strain ATCC 700550 / JCM 31522 / CIP 106686 / LMG 19005 / NCIMB 14063 / MR-1).